A 403-amino-acid polypeptide reads, in one-letter code: Metacaspase-1A (403 aa).

The segment at 1 to 93 is disordered; that stretch reads MQHHHHSSYG…PPTDPVAFGH (93 aa). Low complexity predominate over residues 18–31; sequence GQAYRQQQPYYGQP. Residues 32 to 55 are compositionally biased toward pro residues; sequence SPQPYAQPPPPNYQRPSGYGPPPS. Catalysis depends on residues histidine 194 and cysteine 250.

Belongs to the peptidase C14B family.

Functionally, involved in cell death (apoptosis). The sequence is that of Metacaspase-1A (casA) from Aspergillus terreus (strain NIH 2624 / FGSC A1156).